A 434-amino-acid polypeptide reads, in one-letter code: Histidinol dehydrogenase (434 aa).

NAD(+) contacts are provided by Y130, Q188, and N211. Substrate contacts are provided by S237, Q259, and H262. Zn(2+)-binding residues include Q259 and H262. Active-site proton acceptor residues include E326 and H327. Residues H327, D360, E414, and H419 each coordinate substrate. Residue D360 coordinates Zn(2+). H419 lines the Zn(2+) pocket.

The protein belongs to the histidinol dehydrogenase family. As to quaternary structure, homodimer. Zn(2+) serves as cofactor.

It carries out the reaction L-histidinol + 2 NAD(+) + H2O = L-histidine + 2 NADH + 3 H(+). The protein operates within amino-acid biosynthesis; L-histidine biosynthesis; L-histidine from 5-phospho-alpha-D-ribose 1-diphosphate: step 9/9. Its function is as follows. Catalyzes the sequential NAD-dependent oxidations of L-histidinol to L-histidinaldehyde and then to L-histidine. This chain is Histidinol dehydrogenase, found in Shigella sonnei (strain Ss046).